Reading from the N-terminus, the 205-residue chain is Dephospho-CoA kinase (205 aa).

In terms of domain architecture, DPCK spans 13–205; it reads RIGLTGGIAS…KWINTIREIL (193 aa). 21–26 is an ATP binding site; that stretch reads ASGKST.

The protein belongs to the CoaE family.

The protein resides in the cytoplasm. It carries out the reaction 3'-dephospho-CoA + ATP = ADP + CoA + H(+). It participates in cofactor biosynthesis; coenzyme A biosynthesis; CoA from (R)-pantothenate: step 5/5. In terms of biological role, catalyzes the phosphorylation of the 3'-hydroxyl group of dephosphocoenzyme A to form coenzyme A. The chain is Dephospho-CoA kinase from Prochlorococcus marinus (strain MIT 9312).